The following is a 500-amino-acid chain: Amino-acid acetyltransferase, mitochondrial (500 aa).

The transit peptide at 1 to 19 (MQKPSLSQDLIWILKSVQS) directs the protein to the mitochondrion. The 161-residue stretch at 336-496 (FLGPKCLTDG…YMSVIDKIQP (161 aa)) folds into the N-acetyltransferase domain.

This sequence belongs to the acetyltransferase family.

Its subcellular location is the mitochondrion. The enzyme catalyses L-glutamate + acetyl-CoA = N-acetyl-L-glutamate + CoA + H(+). It participates in amino-acid biosynthesis; L-arginine biosynthesis; N(2)-acetyl-L-ornithine from L-glutamate: step 1/4. In terms of biological role, N-acetylglutamate synthase involved in arginine biosynthesis. In Schizosaccharomyces pombe (strain 972 / ATCC 24843) (Fission yeast), this protein is Amino-acid acetyltransferase, mitochondrial (arg6).